The sequence spans 557 residues: Potassium-transporting ATPase potassium-binding subunit (557 aa).

12 consecutive transmembrane segments (helical) span residues 5-25, 63-83, 132-152, 170-190, 253-273, 283-303, 329-349, 356-376, 379-399, 416-436, 484-504, and 526-546; these read GFLLIATFLLVLMVLARPLGS, LCAILGLNMLGLAVLFFMLLG, GLTVQNFLSAASGIAVIFALI, LLRITLWVLVPVALLIALFFI, FVQMLAIFLIPTALCFAFGEV, LLWAMSVIFVICVGVVMWAEV, VLVSSLFAVVTTAASCGAVIA, ALGGMVPMWLMQIGEVVFGGV, GLYGMMLFVLLAVFIAGLMIG, LTALAILVTPTLVLMGAALAM, LLAFCMFVGRFGVIIPVMAIA, and LFVGLLIGTVLLVGALTFIPA.

This sequence belongs to the KdpA family. In terms of assembly, the system is composed of three essential subunits: KdpA, KdpB and KdpC.

The protein localises to the cell inner membrane. Functionally, part of the high-affinity ATP-driven potassium transport (or Kdp) system, which catalyzes the hydrolysis of ATP coupled with the electrogenic transport of potassium into the cytoplasm. This subunit binds the periplasmic potassium ions and delivers the ions to the membrane domain of KdpB through an intramembrane tunnel. The sequence is that of Potassium-transporting ATPase potassium-binding subunit from Escherichia coli (strain SE11).